Reading from the N-terminus, the 524-residue chain is Bifunctional purine biosynthesis protein PurH (524 aa).

An MGS-like domain is found at 1–144; the sequence is MTRRALVSVS…KNSAHVGVVV (144 aa).

The protein belongs to the PurH family.

It catalyses the reaction (6R)-10-formyltetrahydrofolate + 5-amino-1-(5-phospho-beta-D-ribosyl)imidazole-4-carboxamide = 5-formamido-1-(5-phospho-D-ribosyl)imidazole-4-carboxamide + (6S)-5,6,7,8-tetrahydrofolate. The enzyme catalyses IMP + H2O = 5-formamido-1-(5-phospho-D-ribosyl)imidazole-4-carboxamide. It participates in purine metabolism; IMP biosynthesis via de novo pathway; 5-formamido-1-(5-phospho-D-ribosyl)imidazole-4-carboxamide from 5-amino-1-(5-phospho-D-ribosyl)imidazole-4-carboxamide (10-formyl THF route): step 1/1. The protein operates within purine metabolism; IMP biosynthesis via de novo pathway; IMP from 5-formamido-1-(5-phospho-D-ribosyl)imidazole-4-carboxamide: step 1/1. This chain is Bifunctional purine biosynthesis protein PurH, found in Anaeromyxobacter dehalogenans (strain 2CP-1 / ATCC BAA-258).